Consider the following 709-residue polypeptide: DCC-interacting protein 13-alpha (709 aa).

The required for RAB5A binding stretch occupies residues 1–428; the sequence is MPGIDKLPIE…RPPTARTSSS (428 aa). Residues 3–268 enclose the BAR domain; sequence GIDKLPIEET…DPLYVPDPDP (266 aa). A coiled-coil region spans residues 215–259; it reads SENLNEQLEEFLANIGTSVQNVRREMDSDIETMQQTIEDLEVASD. The PH domain maps to 277–375; it reads LTRKAGYLNA…WICTINNISK (99 aa). Disordered regions lie at residues 397-434, 467-491, and 645-709; these read AVTP…LGSE, GQAK…STKS, and VKEK…ESEA. A Phosphothreonine modification is found at Thr399. Ser401 is subject to Phosphoserine. A F&amp;H motif is present at residues 403–414; the sequence is SFQQRHESLRPA. Ser410 carries the phosphoserine; by PKA modification. The PID domain occupies 496–656; the sequence is SILHQLFIVR…EKQQKELNKQ (161 aa). Positions 621–673 form a coiled coil; sequence LAKQIALHAELDRRASEKQKEIERVKEKQQKELNKQKQIEKDLEEQSRLIAAS. Over residues 645–667 the composition is skewed to basic and acidic residues; it reads VKEKQQKELNKQKQIEKDLEEQS. A compositionally biased stretch (polar residues) spans 674-693; it reads SRPNQASSEGQFVVLSSSQS. Ser693 and Ser696 each carry phosphoserine. Positions 700 to 709 are enriched in basic and acidic residues; sequence EGGKKRESEA.

As to quaternary structure, homodimer. Binds RAB5A/Rab5 through an N-terminal domain. This interaction is essential for its recruitment to endosomal membranes as well as its role in cell proliferation. Binds DCC and the catalytic domain of the inactive form of AKT2 through its PID domain. Binds PIK3CA and subunits of the NuRD/MeCP1 complex. Interacts with OCRL and INPP5B. Interacts with NTRK2. Interacts with APPL2; interaction is independent of follicle stimulating hormone stimulation; interaction is decreased by adiponectin in a time-dependent manner. Forms a complex with APPL2 and RUVBL2. Forms a complex comprising APPL2, RUVBL2, CTNNB1, HDAC1 and HDAC2; interaction reduces interaction between CTNNB1, HDAC1, HDAC2 and RUVBL2 leading to the decrease of deacetylase activity of this complex; affects the recruitment of repressive complexes to the Wnt target genes. Interacts with ANXA2. Interacts with TGFBR1; interaction is TGF beta dependent; mediates trafficking of the TGFBR1 from the endosomes to the nucleus via microtubules in a TRAF6-dependent manner. Interacts with PRKCZ. Interacts with PIK3R1 and APPL2. Interacts with ADIPOR1; ADIPOQ enhances this interaction; inhibites adiponectin-stimulated binding of APPL2 to ADIPOR1. In terms of processing, phosphorylation at Ser-410 by PKA severely impairs binding to OCRL. As to expression, high levels in heart, ovary, pancreas and skeletal muscle.

The protein localises to the early endosome membrane. It is found in the nucleus. It localises to the cytoplasm. Its subcellular location is the endosome. The protein resides in the cell projection. The protein localises to the ruffle. It is found in the cytoplasmic vesicle. It localises to the phagosome. Its function is as follows. Multifunctional adapter protein that binds to various membrane receptors, nuclear factors and signaling proteins to regulate many processes, such as cell proliferation, immune response, endosomal trafficking and cell metabolism. Regulates signaling pathway leading to cell proliferation through interaction with RAB5A and subunits of the NuRD/MeCP1 complex. Functions as a positive regulator of innate immune response via activation of AKT1 signaling pathway by forming a complex with APPL1 and PIK3R1. Inhibits Fc-gamma receptor-mediated phagocytosis through PI3K/Akt signaling in macrophages. Regulates TLR4 signaling in activated macrophages. Involved in trafficking of the TGFBR1 from the endosomes to the nucleus via microtubules in a TRAF6-dependent manner. Plays a role in cell metabolism by regulating adiponecting and insulin signaling pathways. Required for fibroblast migration through HGF cell signaling. Positive regulator of beta-catenin/TCF-dependent transcription through direct interaction with RUVBL2/reptin resulting in the relief of RUVBL2-mediated repression of beta-catenin/TCF target genes by modulating the interactions within the beta-catenin-reptin-HDAC complex. In Homo sapiens (Human), this protein is DCC-interacting protein 13-alpha.